The sequence spans 439 residues: Ribosomal protein uS12 methylthiotransferase RimO (439 aa).

The MTTase N-terminal domain occupies 7-122 (QTIAVIALGC…LPDLVFGKNF (116 aa)). 6 residues coordinate [4Fe-4S] cluster: C16, C52, C85, C155, C159, and C162. Residues 141-369 (SSTIPSAYLK…NAQYNIFQAK (229 aa)) enclose the Radical SAM core domain.

It belongs to the methylthiotransferase family. RimO subfamily. It depends on [4Fe-4S] cluster as a cofactor.

The protein localises to the cytoplasm. It catalyses the reaction L-aspartate(89)-[ribosomal protein uS12]-hydrogen + (sulfur carrier)-SH + AH2 + 2 S-adenosyl-L-methionine = 3-methylsulfanyl-L-aspartate(89)-[ribosomal protein uS12]-hydrogen + (sulfur carrier)-H + 5'-deoxyadenosine + L-methionine + A + S-adenosyl-L-homocysteine + 2 H(+). Its function is as follows. Catalyzes the methylthiolation of an aspartic acid residue of ribosomal protein uS12. The polypeptide is Ribosomal protein uS12 methylthiotransferase RimO (Endomicrobium trichonymphae).